The chain runs to 120 residues: uncharacterized protein (120 aa).

It to M.jannaschii MJ1503.

This is an uncharacterized protein from Methanocaldococcus jannaschii (strain ATCC 43067 / DSM 2661 / JAL-1 / JCM 10045 / NBRC 100440) (Methanococcus jannaschii).